The following is a 530-amino-acid chain: Regulatory protein LuxO (530 aa).

The region spanning 194–423 is the Sigma-54 factor interaction domain; the sequence is IIGNSGPMLA…LEHVINRAAL (230 aa). ATP-binding positions include 222–229 and 285–294; these read GETGVGKE and ADGGTLFLDE.

In terms of biological role, involved in the regulation of different processes depending on the cell density. Acts together with sigma-54 to repress, perhaps indirectly, some genes. The polypeptide is Regulatory protein LuxO (luxO) (Vibrio cholerae serotype O1 (strain ATCC 39541 / Classical Ogawa 395 / O395)).